The chain runs to 225 residues: Endonuclease V (225 aa).

The Mg(2+) site is built by Asp-43 and Asp-110.

Belongs to the endonuclease V family. It depends on Mg(2+) as a cofactor.

The protein localises to the cytoplasm. The catalysed reaction is Endonucleolytic cleavage at apurinic or apyrimidinic sites to products with a 5'-phosphate.. DNA repair enzyme involved in the repair of deaminated bases. Selectively cleaves double-stranded DNA at the second phosphodiester bond 3' to a deoxyinosine leaving behind the intact lesion on the nicked DNA. The sequence is that of Endonuclease V from Thermotoga sp. (strain RQ2).